The sequence spans 310 residues: L-lactate dehydrogenase (310 aa).

Residues Val11, Asp32, Tyr62, and 76–77 (GV) contribute to the NAD(+) site. Residues Gln79, Arg85, and 117 to 120 (NPVD) each bind substrate. Residues 115–117 (ATN) and Ser140 contribute to the NAD(+) site. Substrate is bound at residue 145–148 (DTAR). Residues Arg150 and His165 each contribute to the beta-D-fructose 1,6-bisphosphate site. His172 functions as the Proton acceptor in the catalytic mechanism. Tyr218 bears the Phosphotyrosine mark. Thr227 serves as a coordination point for substrate.

The protein belongs to the LDH/MDH superfamily. LDH family. As to quaternary structure, homotetramer.

The protein localises to the cytoplasm. The catalysed reaction is (S)-lactate + NAD(+) = pyruvate + NADH + H(+). Its pathway is fermentation; pyruvate fermentation to lactate; (S)-lactate from pyruvate: step 1/1. With respect to regulation, allosterically activated by fructose 1,6-bisphosphate (FBP). Its function is as follows. Catalyzes the conversion of lactate to pyruvate. The protein is L-lactate dehydrogenase of Thermus thermophilus (strain ATCC BAA-163 / DSM 7039 / HB27).